The primary structure comprises 984 residues: Putative formate dehydrogenase SAB2186c (984 aa).

One can recognise a 2Fe-2S ferredoxin-type domain in the interval 3-79 (EHLVVTLDGK…PMTVNTVNND (77 aa)). [2Fe-2S] cluster contacts are provided by Cys37, Cys48, Cys51, and Cys63. The 4Fe-4S His(Cys)3-ligated-type domain maps to 79–119 (DVKDAQKEALDRILEKHMLYCTVCDYNNGDCEIHNTMDAWG). His95, Cys99, Cys102, Cys109, Cys147, Cys150, Cys153, Cys157, Cys190, Cys193, Cys196, Cys200, Cys264, Cys267, Cys271, and Cys299 together coordinate [4Fe-4S] cluster. 2 consecutive 4Fe-4S ferredoxin-type domains span residues 138-165 (PFYR…VNET) and 181-211 (NDVP…VNME). A formate dehydrogenase region spans residues 252 to 984 (MRKERIKKTK…YVFPGNQVDK (733 aa)). Positions 257–313 (IKKTKTVCTYCGVGCSFEVWTKDREILKVQPSHDSPANKIATCVKGKFSWGHINSDQ) constitute a 4Fe-4S Mo/W bis-MGD-type domain.

It in the C-terminal section; belongs to the prokaryotic molybdopterin-containing oxidoreductase family. Requires [2Fe-2S] cluster as cofactor. The cofactor is [4Fe-4S] cluster. Mo-bis(molybdopterin guanine dinucleotide) serves as cofactor.

The enzyme catalyses formate + NAD(+) = CO2 + NADH. The protein is Putative formate dehydrogenase SAB2186c of Staphylococcus aureus (strain bovine RF122 / ET3-1).